A 302-amino-acid polypeptide reads, in one-letter code: Putative beta-glucosidase 17 (302 aa).

The signal sequence occupies residues 1 to 27 (MMAVAAATRIAVVVVAALAALAPGARG). Residues Gln-47, His-149, and 194-195 (NE) contribute to the a beta-D-glucoside site. Glu-195 (proton donor) is an active-site residue. Cys-214 and Cys-221 are joined by a disulfide. Asn-274 carries N-linked (GlcNAc...) asparagine glycosylation.

The protein belongs to the glycosyl hydrolase 1 family.

It catalyses the reaction Hydrolysis of terminal, non-reducing beta-D-glucosyl residues with release of beta-D-glucose.. In Oryza sativa subsp. japonica (Rice), this protein is Putative beta-glucosidase 17 (BGLU17).